A 59-amino-acid chain; its full sequence is MFAGLPSLTHEQQQKAVERIQELMAQGMSSGQAIALVAEELRANHSGERIVARFEDEDE.

The protein belongs to the UPF0181 family.

This is UPF0181 protein YoaH from Shigella sonnei (strain Ss046).